The primary structure comprises 690 residues: Cyclic nucleotide-gated channel alpha-1 (690 aa).

The Cytoplasmic segment spans residues 1–163 (MKKVIINTWH…VVIDPSGNTY (163 aa)). Disordered regions lie at residues 33–76 (GACS…PSQR) and 88–151 (NVNN…EEKK). Residues 40–54 (GDDDDSASMFEESET) show a composition bias toward acidic residues. Polar residues predominate over residues 64–76 (RSNTHGSGQPSQR). Over residues 111–151 (SKPDDKNENKKDPEKKKKKEKDKDKKKKEEKGKDKKEEEKK) the composition is skewed to basic and acidic residues. A helical transmembrane segment spans residues 164 to 185 (YNWLFCITLPVMYNWTMIIARA). Residues 186 to 195 (CFDELQSDYL) are Extracellular-facing. The helical transmembrane segment at 196-215 (EYWLAFDYLSDVVYLLDMFV) threads the bilayer. Residues 216-241 (RTRTGYLEQGLLVKEERKLIDKYKST) are Cytoplasmic-facing. The helical transmembrane segment at 242–251 (FQFKLDVLSV) threads the bilayer. The Extracellular segment spans residues 252–264 (IPTDLLYIKFGWN). Residues 265 to 283 (YPEIRLNRLLRISRMFEFF) traverse the membrane as a helical segment. Topologically, residues 284-291 (QRTETRTN) are cytoplasmic. The helical transmembrane segment at 292-315 (YPNIFRISNLVMYIIIIIHWNACV) threads the bilayer. An ion conduction pathway region spans residues 293-402 (PNIFRISNLV…NIGSMISNMN (110 aa)). Residues 316–342 (YFSISKAIGFGNDTWVYPDVNDPDFGR) lie on the Extracellular side of the membrane. An N-linked (GlcNAc...) asparagine glycan is attached at Asn-327. 2 helical membrane-spanning segments follow: residues 343-373 (LARK…DSEY) and 374-399 (FFVV…SMIS). Positions 360-363 (TIGE) are selectivity filter. Over 400–690 (NMNAARAEFQ…ESGPTDSTQD (291 aa)) the chain is Cytoplasmic. Positions 403–479 (AARAEFQARI…DTLKKVRIFA (77 aa)) are C-linker. Residues 482-603 (EAGLLVELVL…EEKGKQILMK (122 aa)) form a cyclic nucleotide-binding domain (CNBD) region. 3',5'-cyclic GMP is bound by residues Gly-543, Ser-546, Arg-559, and Thr-560. The 3',5'-cyclic AMP site is built by Arg-559 and Thr-560. Residues 621 to 664 (LEEKVTRMESSVDLLQTRFARILAEYESMQQKLKQRLTKVEKFL) are a coiled coil.

The protein belongs to the cyclic nucleotide-gated cation channel (TC 1.A.1.5) family. CNGA1 subfamily. Forms a heterotetramer with CNGB1 in a 3:1 ratio. May also form cyclic nucleotide-activated homotetrameric channels, that are efficiently activated by saturating cGMP, but poorly activated by saturating cAMP compared to the heterotetramer with CNGB1. The channel binds Ca(2+)-bound CALM1 via CaM1 and CaM2 regions of the CNGB1 subunit; this interaction modulates the affinity of the channel for cNMPs in response to intracellular Ca(2+) levels. Expressed in the retina, in rod cells (at protein level).

Its subcellular location is the cell membrane. The enzyme catalyses Ca(2+)(in) = Ca(2+)(out). It carries out the reaction Na(+)(in) = Na(+)(out). It catalyses the reaction K(+)(in) = K(+)(out). The catalysed reaction is NH4(+)(in) = NH4(+)(out). The enzyme catalyses Rb(+)(in) = Rb(+)(out). It carries out the reaction Li(+)(in) = Li(+)(out). It catalyses the reaction Cs(+)(in) = Cs(+)(out). Functionally, pore-forming subunit of the rod cyclic nucleotide-gated channel. Mediates rod photoresponses at dim light converting transient changes in intracellular cGMP levels into electrical signals. In the dark, cGMP levels are high and keep the channel open enabling a steady inward current carried by Na(+) and Ca(2+) ions that leads to membrane depolarization and neurotransmitter release from synaptic terminals. Upon photon absorption cGMP levels decline leading to channel closure and membrane hyperpolarization that ultimately slows neurotransmitter release and signals the presence of light, the end point of the phototransduction cascade. Conducts cGMP- and cAMP-gated ion currents, with permeability for monovalent and divalent cations. The selectivity for Ca(2+) over Na(+) increases with cGMP concentrations, whereas the selectivity among monovalent ions is independent of the cGMP levels. The polypeptide is Cyclic nucleotide-gated channel alpha-1 (Bos taurus (Bovine)).